The sequence spans 420 residues: Anaerobic glycerol-3-phosphate dehydrogenase subunit B (420 aa).

The protein belongs to the anaerobic G-3-P dehydrogenase subunit B family. In terms of assembly, composed of a catalytic GlpA/B dimer and of membrane bound GlpC. FMN is required as a cofactor.

It catalyses the reaction a quinone + sn-glycerol 3-phosphate = dihydroxyacetone phosphate + a quinol. Its pathway is polyol metabolism; glycerol degradation via glycerol kinase pathway; glycerone phosphate from sn-glycerol 3-phosphate (anaerobic route): step 1/1. Its function is as follows. Conversion of glycerol 3-phosphate to dihydroxyacetone. Uses fumarate or nitrate as electron acceptor. This is Anaerobic glycerol-3-phosphate dehydrogenase subunit B from Pectobacterium carotovorum subsp. carotovorum (strain PC1).